The primary structure comprises 287 residues: Heterodimeric geranylgeranyl pyrophosphate synthase small subunit 2, chloroplastic (287 aa).

E103 and D109 together coordinate Mg(2+). Dimethylallyl diphosphate-binding residues include K204, Q241, and K250.

This sequence belongs to the FPP/GGPP synthase family. In terms of assembly, part of a heterodimeric geranyl(geranyl)diphosphate synthase. Mg(2+) is required as a cofactor. As to expression, mainly expressed in trichomes, and, to a lower extent, in roots, leaves, flowers and stems.

The protein resides in the plastid. It localises to the chloroplast thylakoid membrane. Heterodimeric geranyl(geranyl)-diphosphate (GPP) synthase small subunit. The small subunit alone is inactive in vitro while the large subunit GGPPS1 catalyzes mainly the production of geranygeranyl-diphosphate in vitro. Upon association of the two subunits, the product profile changes and the production of gerany-diphosphate is strongly increased. This chain is Heterodimeric geranylgeranyl pyrophosphate synthase small subunit 2, chloroplastic, found in Cannabis sativa (Hemp).